Reading from the N-terminus, the 431-residue chain is MSVLTLKARAGADDVDALMREIGRQARAAARRMALVSGQQKDRGLRAAAAAIRAAAPAILEANRADLTEARAKDLPAATLDRLELTPARVEAIAAAVEAIAGLPDPVGRRLAAFERPNGLSIERIATPLGVVGVIFESRPNVTADAGALCLKAGNAAVLRAGSESLRSAAAIAAAMTEGLVAEGLPADAIQLVPTRDRAAVGAMLSGLDGCIDVIVPRGGKNLVARVQNEAKVPVFAHLEGICHVFVHAAADLAMARTIVRNSKLRRTGICGAAETLLVDRACASTHLAPLVLDLLEAGCAVRGDEATRAVDPRVTPASEADWRTEYLDAVIAVRVVEGLDAAIDHIETFGSHHTDAIVTHDTGAAERFLAEVDSAIVVHNASTQFADGGEFGFGAEIGIATGRMHARGPVGVEQLTTFKYRVHGSGQIRP.

It belongs to the gamma-glutamyl phosphate reductase family.

The protein resides in the cytoplasm. The enzyme catalyses L-glutamate 5-semialdehyde + phosphate + NADP(+) = L-glutamyl 5-phosphate + NADPH + H(+). It participates in amino-acid biosynthesis; L-proline biosynthesis; L-glutamate 5-semialdehyde from L-glutamate: step 2/2. Catalyzes the NADPH-dependent reduction of L-glutamate 5-phosphate into L-glutamate 5-semialdehyde and phosphate. The product spontaneously undergoes cyclization to form 1-pyrroline-5-carboxylate. This Methylobacterium nodulans (strain LMG 21967 / CNCM I-2342 / ORS 2060) protein is Gamma-glutamyl phosphate reductase.